Reading from the N-terminus, the 193-residue chain is Potassium-transporting ATPase KdpC subunit (193 aa).

The helical transmembrane segment at 14–34 (ITFTFLVLCGLVYPLIVTGIA) threads the bilayer.

This sequence belongs to the KdpC family. The system is composed of three essential subunits: KdpA, KdpB and KdpC.

It is found in the cell membrane. Part of the high-affinity ATP-driven potassium transport (or Kdp) system, which catalyzes the hydrolysis of ATP coupled with the electrogenic transport of potassium into the cytoplasm. This subunit acts as a catalytic chaperone that increases the ATP-binding affinity of the ATP-hydrolyzing subunit KdpB by the formation of a transient KdpB/KdpC/ATP ternary complex. The polypeptide is Potassium-transporting ATPase KdpC subunit (Bacillus mycoides (strain KBAB4) (Bacillus weihenstephanensis)).